A 217-amino-acid chain; its full sequence is Magnetosome protein MamA (217 aa).

TPR repeat units lie at residues 12-44, 46-79, 80-113, 114-147, 148-181, and 182-215; these read VTLYTHYGLSVAKKLGANMVDAFRSAFSVNDDI, QVYYRDKGISHAKAGRYSEAVVMLEQVYDADAFD, VEVALHLGIAYVKTGAVDRGTELLERSIADAPDN, IKVATVLGLTYVQVQKYDLAVPLLVKVAEANPVN, FNVRFRLGVALDNLGRFDEAIDSFKIALGLRPNE, and GKVHRAIAYSYEQMGSHEEALPHFKKANELDERS. The segment at 41–112 is N-terminal domain; it reads NDDIRQVYYR…LERSIADAPD (72 aa). A C-terminal domain region spans residues 113–217; sequence NIKVATVLGL…ANELDERSAV (105 aa).

Belongs to the magnetosome MamA family. Forms round, 20 nm diameter complexes with a central cavity. Probably binds MamC. Interacts with full-length Mms6.

It is found in the magnetosome membrane. Probably forms a large homooligomer on which other magnetosome subunits assemble. Required for formation of functional magnetosomes from pre-existing vesicles. The protein is Magnetosome protein MamA of Magnetospirillum gryphiswaldense (strain DSM 6361 / JCM 21280 / NBRC 15271 / MSR-1).